The following is a 444-amino-acid chain: Protein kinase C and casein kinase substrate in neurons protein 1 (444 aa).

A phosphoserine mark is found at Ser2 and Ser79. One can recognise an F-BAR domain in the interval 13–283 (EETTDSFWEV…AIRGADAQDD (271 aa)). A coiled-coil region spans residues 26–275 (KRTVKRIDDG…QVYRELEQAI (250 aa)). A Phosphothreonine modification is found at Thr184. Residues 313–384 (AAKKEKQPKK…NGGSNPFDED (72 aa)) are disordered. Over residues 314-324 (AKKEKQPKKAE) the composition is skewed to basic and acidic residues. Residues 336-358 (ESTSQAGDRGSVSSYDRGQTYAT) show a composition bias toward polar residues. Phosphoserine occurs at positions 346, 348, 349, 361, and 365. The region spanning 385–444 (AKGVRVRALYDYDGQEQDELSFKAGDELTKLGEEDEQGWCRGRLDSGQLGLYPANYVEVV) is the SH3 domain. A Phosphotyrosine modification is found at Tyr394. Ser405 and Ser430 each carry phosphoserine.

This sequence belongs to the PACSIN family. In terms of assembly, homodimer. May form heterooligomers with other PACSINs. Interacts with MAPT. Interacts (via SH3 domain) with SYNJ1 and WASL. Interacts (via SH3 domain) with DNM1; the interaction is reduced by DNM1 phosphorylation. Interacts with DNM2 and DNM3. Interacts with both COBL and DBNL. Identified in a complex composed of COBL, PACSIN1 and WASL. Interacts with EHD1 and EHD3. Interacts with TRPV4. Phosphorylated by casein kinase 2 (CK2) and protein kinase C (PKC).

The protein resides in the cytoplasm. It localises to the cell projection. It is found in the synapse. The protein localises to the synaptosome. Its subcellular location is the ruffle membrane. The protein resides in the membrane. It localises to the cytoplasmic vesicle membrane. It is found in the cytosol. The protein localises to the cell membrane. Binds to membranes via its F-BAR domain and mediates membrane tubulation. Plays a role in the reorganization of the microtubule cytoskeleton via its interaction with MAPT; this decreases microtubule stability and inhibits MAPT-induced microtubule polymerization. Plays a role in cellular transport processes by recruiting DNM1, DNM2 and DNM3 to membranes. Plays a role in the reorganization of the actin cytoskeleton and in neuron morphogenesis via its interaction with COBL and WASL, and by recruiting COBL to the cell cortex. Plays a role in the regulation of neurite formation, neurite branching and the regulation of neurite length. Required for normal synaptic vesicle endocytosis; this process retrieves previously released neurotransmitters to accommodate multiple cycles of neurotransmission. Required for normal excitatory and inhibitory synaptic transmission. This chain is Protein kinase C and casein kinase substrate in neurons protein 1 (PACSIN1), found in Bos taurus (Bovine).